Reading from the N-terminus, the 65-residue chain is Large ribosomal subunit protein bL35 (65 aa).

The segment at 1 to 65 is disordered; it reads MPKIKTNRAA…GRLDRMLPYL (65 aa). The segment covering 10–44 has biased composition (basic residues); it reads AAKRFRKTASGKYKAGHANRSHILTKKATKRKRNL. Basic and acidic residues predominate over residues 50-65; the sequence is VRAEDAGRLDRMLPYL.

Belongs to the bacterial ribosomal protein bL35 family.

The polypeptide is Large ribosomal subunit protein bL35 (Xylella fastidiosa (strain M23)).